The following is a 465-amino-acid chain: Cysteine--tRNA ligase (465 aa).

C29 is a Zn(2+) binding site. A 'HIGH' region motif is present at residues 31–41; the sequence is PTVYNYIHIGN. The Zn(2+) site is built by C209, H234, and E238. The 'KMSKS' region signature appears at 266 to 270; that stretch reads KMSKS. K269 contacts ATP. S270 bears the Phosphoserine mark.

It belongs to the class-I aminoacyl-tRNA synthetase family. Monomer. The cofactor is Zn(2+).

The protein resides in the cytoplasm. It catalyses the reaction tRNA(Cys) + L-cysteine + ATP = L-cysteinyl-tRNA(Cys) + AMP + diphosphate. The protein is Cysteine--tRNA ligase of Bacillus cereus (strain ATCC 10987 / NRS 248).